Reading from the N-terminus, the 156-residue chain is Transcription elongation factor GreA (156 aa).

Residues 2–27 (EKTFPMTKEGLDKLKAELENLKLVKR) adopt a coiled-coil conformation.

It belongs to the GreA/GreB family.

In terms of biological role, necessary for efficient RNA polymerase transcription elongation past template-encoded arresting sites. The arresting sites in DNA have the property of trapping a certain fraction of elongating RNA polymerases that pass through, resulting in locked ternary complexes. Cleavage of the nascent transcript by cleavage factors such as GreA or GreB allows the resumption of elongation from the new 3'terminus. GreA releases sequences of 2 to 3 nucleotides. In Lactococcus lactis subsp. cremoris (strain SK11), this protein is Transcription elongation factor GreA.